The chain runs to 653 residues: TRAF3-interacting protein 1 (653 aa).

Residues 1–306 are abolishes microtubules binding when missing; the sequence is MNAAVVRRTQ…ADKSEKKADI (306 aa). Positions 134 to 467 are disordered; that stretch reads GDSRGRVLRT…DSQNSDNEDD (334 aa). Composition is skewed to basic and acidic residues over residues 145-305, 325-335, and 370-384; these read KAQE…KKAD, NSLEGRKEDNI, and ENAEPEPAVKQKGDS. A DISC1-interaction domain region spans residues 229 to 653; it reads RAKQDRDRNN…VHSINLSSRR (425 aa). At Ser437 the chain carries Phosphoserine. Positions 448–462 are enriched in polar residues; sequence SGKTVSTVIIDSQNS. A coiled-coil region spans residues 533 to 628; the sequence is AWKKEKDIVS…IKDQQDKICA (96 aa).

This sequence belongs to the TRAF3IP1 family. Component of the IFT complex B, at least composed of IFT20, IFT22, IFT25, IFT27, IFT46, IFT52, TRAF3IP1/IFT54, IFT57, IFT74, IFT80, IFT81, and IFT88. Interacts with IFT88. Interacts with IL13RA1. Binds to microtubules, TRAF3 and DISC1. Interacts with MAP4.

It is found in the cytoplasm. Its subcellular location is the cytoskeleton. The protein resides in the cell projection. The protein localises to the cilium. It localises to the cilium axoneme. It is found in the cilium basal body. Its function is as follows. Plays an inhibitory role on IL13 signaling by binding to IL13RA1. Involved in suppression of IL13-induced STAT6 phosphorylation, transcriptional activity and DNA-binding. Recruits TRAF3 and DISC1 to the microtubules. Involved in kidney development and epithelial morphogenesis. Involved in the regulation of microtubule cytoskeleton organization. Is a negative regulator of microtubule stability, acting through the control of MAP4 levels. Involved in ciliogenesis. This chain is TRAF3-interacting protein 1 (Traf3ip1), found in Rattus norvegicus (Rat).